We begin with the raw amino-acid sequence, 58 residues long: Large ribosomal subunit protein eL37 (58 aa).

Positions 20, 23, 35, and 38 each coordinate Zn(2+). The C4-type zinc finger occupies 20–38 (CRRCGEKSYHTKKKVCSSC).

Belongs to the eukaryotic ribosomal protein eL37 family. The cofactor is Zn(2+).

Its function is as follows. Binds to the 23S rRNA. The polypeptide is Large ribosomal subunit protein eL37 (Haloquadratum walsbyi (strain DSM 16790 / HBSQ001)).